Here is a 299-residue protein sequence, read N- to C-terminus: Non-homologous end-joining factor 1 (299 aa).

The tract at residues 1 to 135 (MEELEQGLLM…ASPSLVSQHL (135 aa)) is globular head. A coiled-coil region spans residues 128–170 (PSLVSQHLIRPLMGMSLALQCQVRELATLLHMKDLEIQDYQES). Phosphoserine; by PRKDC is present on residues Ser-132, Ser-203, Ser-245, and Ser-251. The segment at 224 to 288 (QEVQVGQKHQ…GPLQRPQLSK (65 aa)) is C-terminal tail. Polar residues predominate over residues 255-266 (NQPEQLVSSAPT). The segment at 255-299 (NQPEQLVSSAPTLSAPEKESTGTSGPLQRPQLSKVKRKKPRGLFS) is disordered. Residue Ser-263 is modified to Phosphoserine. Residue Thr-266 is modified to Phosphothreonine. Ser-287 carries the post-translational modification Phosphoserine. Over residues 288–299 (KVKRKKPRGLFS) the composition is skewed to basic residues. An XLM motif is present at residues 289–299 (VKRKKPRGLFS).

It belongs to the XRCC4-XLF family. XLF subfamily. In terms of assembly, homodimer; mainly exists as a homodimer when not associated with XRCC4. Interacts with XRCC4; the interaction is direct and is mediated via a head-to-head interaction between N-terminal head regions. Component of the core long-range non-homologous end joining (NHEJ) complex (also named DNA-PK complex) composed of PRKDC, LIG4, XRCC4, XRCC6/Ku70, XRCC5/Ku86 and NHEJ1/XLF. Additional component of the NHEJ complex includes PAXX. Following autophosphorylation, PRKDC dissociates from DNA, leading to formation of the short-range NHEJ complex, composed of LIG4, XRCC4, XRCC6/Ku70, XRCC5/Ku86 and NHEJ1/XLF. Interacts with POLL (DNA polymerase lambda); promoting POLL recruitment to double-strand breaks (DSBs) and stimulation of the end-filling activity of POLL. In terms of processing, phosphorylated by PRKDC at the C-terminus in response to DNA damage. Phosphorylations by PRKDC at the C-terminus of XRCC4 and NHEJ1/XLF are highly redundant and regulate ability of the XRCC4-NHEJ1/XLF subcomplex to bridge DNA. Phosphorylation does not prevent interaction with XRCC4 but disrupts ability to bridge DNA and promotes detachment from DNA. As to expression, ubiquitously expressed.

Its subcellular location is the nucleus. It localises to the chromosome. Functionally, DNA repair protein involved in DNA non-homologous end joining (NHEJ); it is required for double-strand break (DSB) repair and V(D)J recombination and is also involved in telomere maintenance. Plays a key role in NHEJ by promoting the ligation of various mismatched and non-cohesive ends. Together with PAXX, collaborates with DNA polymerase lambda (POLL) to promote joining of non-cohesive DNA ends. May act in concert with XRCC5-XRCC6 (Ku) to stimulate XRCC4-mediated joining of blunt ends and several types of mismatched ends that are non-complementary or partially complementary. In some studies, has been shown to associate with XRCC4 to form alternating helical filaments that bridge DNA and act like a bandage, holding together the broken DNA until it is repaired. Alternatively, it has also been shown that rather than forming filaments, a single NHEJ1 dimer interacts through both head domains with XRCC4 to promote the close alignment of DNA ends. The XRCC4-NHEJ1/XLF subcomplex binds to the DNA fragments of a DSB in a highly diffusive manner and robustly bridges two independent DNA molecules, holding the broken DNA fragments in close proximity to one other. The mobility of the bridges ensures that the ends remain accessible for further processing by other repair factors. Binds DNA in a length-dependent manner. The sequence is that of Non-homologous end-joining factor 1 from Homo sapiens (Human).